The chain runs to 221 residues: 6-phosphogluconate phosphatase (221 aa).

The active-site Nucleophile is the aspartate 10. Mg(2+) is bound by residues aspartate 10, aspartate 12, and aspartate 167. Residue 10-12 (DCD) participates in substrate binding.

The protein belongs to the HAD-like hydrolase superfamily. CbbY/CbbZ/Gph/YieH family. It depends on Mg(2+) as a cofactor. Mn(2+) serves as cofactor. Requires Co(2+) as cofactor. The cofactor is Zn(2+).

Functionally, catalyzes strongly the dephosphorylation of 6-phosphogluconate (6P-Glu) and slightly the dephosphorylation of dihydroxyacetone phosphate (DHAP) and phosphoenolpyruvate (PEP). Also hydrolyzes both purines (GMP and IMP) and pyrimidines as secondary substrates. The chain is 6-phosphogluconate phosphatase (yieH) from Escherichia coli (strain K12).